Reading from the N-terminus, the 198-residue chain is Protein GrpE (198 aa).

The segment covering M1–E21 has biased composition (basic and acidic residues). Residues M1–N56 are disordered. Residues G22–A34 show a composition bias toward low complexity. Over residues G44 to N56 the composition is skewed to basic and acidic residues.

Belongs to the GrpE family. As to quaternary structure, homodimer.

It localises to the cytoplasm. Its function is as follows. Participates actively in the response to hyperosmotic and heat shock by preventing the aggregation of stress-denatured proteins, in association with DnaK and GrpE. It is the nucleotide exchange factor for DnaK and may function as a thermosensor. Unfolded proteins bind initially to DnaJ; upon interaction with the DnaJ-bound protein, DnaK hydrolyzes its bound ATP, resulting in the formation of a stable complex. GrpE releases ADP from DnaK; ATP binding to DnaK triggers the release of the substrate protein, thus completing the reaction cycle. Several rounds of ATP-dependent interactions between DnaJ, DnaK and GrpE are required for fully efficient folding. In Chlorobium luteolum (strain DSM 273 / BCRC 81028 / 2530) (Pelodictyon luteolum), this protein is Protein GrpE.